The following is a 98-amino-acid chain: Large ribosomal subunit protein bL28 (98 aa).

This sequence belongs to the bacterial ribosomal protein bL28 family.

The sequence is that of Large ribosomal subunit protein bL28 from Rhizobium etli (strain ATCC 51251 / DSM 11541 / JCM 21823 / NBRC 15573 / CFN 42).